The primary structure comprises 372 residues: Saccharopine dehydrogenase [NAD(+), L-lysine-forming] (372 aa).

Positions 18 and 77 each coordinate L-saccharopine. The active-site Proton acceptor is Lys77. His95 acts as the Proton donor in catalysis. L-saccharopine is bound at residue Gln100. An NAD(+)-binding site is contributed by Arg129. Residues Arg130 and Phe134 each coordinate L-saccharopine. Residues 200–201 (GR), Asp224, Thr228, Tyr248, and Val275 contribute to the NAD(+) site. A disulfide bridge connects residues Cys202 and Cys246. Residue 276–278 (SAD) coordinates L-saccharopine. Residue 316-319 (IDHL) participates in NAD(+) binding.

It belongs to the AlaDH/PNT family. As to quaternary structure, monomer.

The catalysed reaction is L-saccharopine + NAD(+) + H2O = L-lysine + 2-oxoglutarate + NADH + H(+). It participates in amino-acid biosynthesis; L-lysine biosynthesis via AAA pathway; L-lysine from L-alpha-aminoadipate (fungal route): step 3/3. Functionally, catalyzes the NAD(+)-dependent cleavage of saccharopine to L-lysine and 2-oxoglutarate, the final step in the alpha-aminoadipate (AAA) pathway for lysin biosynthesis. The protein is Saccharopine dehydrogenase [NAD(+), L-lysine-forming] (lys-4) of Neurospora crassa (strain ATCC 24698 / 74-OR23-1A / CBS 708.71 / DSM 1257 / FGSC 987).